The primary structure comprises 258 residues: Regulatory protein RecX (258 aa).

Belongs to the RecX family.

The protein localises to the cytoplasm. In terms of biological role, modulates RecA activity. This Streptococcus agalactiae serotype Ia (strain ATCC 27591 / A909 / CDC SS700) protein is Regulatory protein RecX.